The primary structure comprises 752 residues: Complement C2 (752 aa).

The first 20 residues, 1 to 20 (MGPLMVLFCLLFLYPGLADS), serve as a signal peptide directing secretion. Sushi domains lie at 22–86 (PSCP…VCKP), 87–146 (VRCP…VCDN), and 149–206 (GHCP…ICRQ). 6 cysteine pairs are disulfide-bonded: cysteine 24/cysteine 64, cysteine 51/cysteine 84, cysteine 89/cysteine 131, cysteine 117/cysteine 144, cysteine 151/cysteine 191, and cysteine 177/cysteine 204. N-linked (GlcNAc...) asparagine glycosylation occurs at asparagine 29. Asparagine 112 carries N-linked (GlcNAc...) asparagine glycosylation. A VWFA domain is found at 254 to 452 (NLYLLLDCSQ…KALHQVFEHM (199 aa)). The MIDAS-like motif signature appears at 260–264 (DCSQS). Mg(2+) contacts are provided by serine 262 and serine 264. N-linked (GlcNAc...) asparagine glycans are attached at residues asparagine 290 and asparagine 333. Threonine 337 provides a ligand contact to Mg(2+). Disulfide bonds link cysteine 463–cysteine 581, cysteine 492–cysteine 508, and cysteine 584–cysteine 600. The region spanning 464–744 (GVGNMSANAS…MQPWLRQHLG (281 aa)) is the Peptidase S1 domain. Residues asparagine 467 and asparagine 471 are each glycosylated (N-linked (GlcNAc...) asparagine). Catalysis depends on charge relay system residues histidine 507 and aspartate 561. Asparagine 621 is a glycosylation site (N-linked (GlcNAc...) asparagine). Cystine bridges form between cysteine 638/cysteine 665 and cysteine 675/cysteine 705. The active-site Charge relay system is serine 679.

This sequence belongs to the peptidase S1 family. As to quaternary structure, serine protease component of the C3 convertase, also named C4bC2b, composed of the serine protease complement C2b and complement C4b. Serine protease component of the C5 convertase, also named C4bC2bC3b, composed of the serine protease complement C2b, complement C3b, as well as complement C4b. Requires Mg(2+) as cofactor. Mn(2+) serves as cofactor. In terms of processing, cleaved and activated by different proteases depending on the complement pathway to generate complement C2a and serine protease complement C2b chains. Cleaved and activated by C1S following activation by the classical complement system. Cleaved and activated by MASP2 following activation by the lectin complement system. Cleaved and activated by GZMK following activation by the GZMK complement system.

It is found in the secreted. Its subcellular location is the cell surface. The enzyme catalyses Selective cleavage of Arg-|-Ser bond in complement component C3 alpha-chain to form C3a and C3b, and Arg-|-Xaa bond in complement component C5 alpha-chain to form C5a and C5b.. Precursor of the catalytic component of the C3 and C5 convertase complexes, which are part of the complement pathway, a cascade of proteins that leads to phagocytosis and breakdown of pathogens and signaling that strengthens the adaptive immune system. Component C2 is part of the classical, lectin and GZMK complement systems. Its function is as follows. Catalytic component of the complement C3 and C5 convertase complexes. Following complement activation, recruited to the surface of pathogens by complement C4b opsonin to form the C3 convertase, or C3b and C4b opsonins to form the C5 convertase. As part of the C3 convertase, cleaves and activate C3 into C3a anaphylatoxin and C3b opsonin, the next components of the complement pathways. As part of the C5 convertase, cleaves and activate C5 into C5a anaphylatoxin and C5b component of the membrane attack complex. This is Complement C2 from Pongo pygmaeus (Bornean orangutan).